A 651-amino-acid polypeptide reads, in one-letter code: L-aspartate oxidase, chloroplastic (651 aa).

A chloroplast-targeting transit peptide spans Met-1–Arg-74. Residues Ser-92–Ala-95, Lys-114, Asn-121–Gly-128, and Asp-292 each bind FAD. The active-site Proton donor/acceptor is the Arg-368. FAD-binding positions include Glu-453 and Ser-469 to Leu-470.

The protein belongs to the FAD-dependent oxidoreductase 2 family. NadB subfamily. In terms of assembly, interacts in vitro with QS. It depends on FAD as a cofactor.

Its subcellular location is the plastid. The protein resides in the chloroplast. The enzyme catalyses L-aspartate + O2 = iminosuccinate + H2O2. The protein operates within cofactor biosynthesis; NAD(+) biosynthesis; iminoaspartate from L-aspartate (oxidase route): step 1/1. Its function is as follows. Catalyzes the oxidation of L-aspartate to iminoaspartate. Can complement nadB-deficient E.coli mutant. Plays a role in stomatal immunity. The protein is L-aspartate oxidase, chloroplastic of Arabidopsis thaliana (Mouse-ear cress).